We begin with the raw amino-acid sequence, 977 residues long: MAMLEARPYRPFKSSEEYLEAMREDLAEWLSTLYPELSINADNFMDRLDTGVALCKHANYVRQAAVDYLARRQARNKSMTRSMTSGLAGPILAMGNVHYLPAAKSGTFFARDNVSNFITWCRKSLKIIECLLFETDDLIMRKNEKHVILCLLEVARRGAKFGMLAPMLVQMERQIDREIAADIKANGAGCSENGTQTDALETGNSSAATMTTITTTTVETDLYDDSDDSETEDDGDQNPVLMYGPQPQIITNDLKSLDEMVRDLVEKCTCPSQFPMVRVSEGKYRIGDTKVLIFVRILRSHVMVRVGGGWDTLSHYLDKHDPCRCRAQHRSSVAARLIPRQSPNHNPSNGIELHKAQVIFERSPPAARRVFNSPNCNGGPGTGSSCGTGVVGVAVPPTLQNGHSLSPNSGKYRSRSPTPQRKFLNQQANGGGIASATGSSQTVTTDTSSGQLLGSPSLARRSMSPSPRRLIDMRKKQSSLDSYSSGPKSLPGYSCSMEEANGGSGVGSAAGGVSSGSAGSGVAGEQGGANKFENISDNGSEISDEGYRSLGVIQSGAQKRESLHSQASIEDAESNARLDQTSSDSQISPSDEPAEKATTDILEEEDLNGQDREEDQEDYSVCDGPQSLPAILSGAHKLSDKFEQSGVFITDDEITVDIAKTEDQSVANTMGNPTPNLSKIPRSPLAQRRRRSIDNSTCGGAGGSLQDLSSRSGLPAPAFSRKQPVYRSVRTRNSTGATTTPVAPPRSRQATQLPMVRDVTNTWSGRTTGAPKRRPPCTADTFVAPTNGTGPAGSFERNGKGRSSQILYDSNGRRVRSGAPGCTSSLTTSPVKNHASSPLAQQLLEAASSAKNDAQILEKMKSLLSRYAAGNQTKAGVGATATAANKINSNGKKTPVYEDFTTAWVHSNGNLERSESCSPPAKARSKRSSAASSCESNNSNAGAGSGAAAGSASVVSPRRERGMSKIPAPVRHHTELY.

A Calponin-homology (CH) domain is found at 20–159; the sequence is EAMREDLAEW…CLLEVARRGA (140 aa). Residues 218 to 245 form a disordered region; it reads VETDLYDDSDDSETEDDGDQNPVLMYGP. Over residues 221 to 236 the composition is skewed to acidic residues; it reads DLYDDSDDSETEDDGD. Residues 252–324 form the GAR domain; that stretch reads NDLKSLDEMV…HYLDKHDPCR (73 aa). 5 disordered regions span residues 397–543, 557–624, 666–685, 693–803, and 910–977; these read PTLQ…SEIS, AQKR…VCDG, VANTMGNPTPNLSKIPRSPL, IDNS…KGRS, and NLER…TELY. 2 stretches are compositionally biased toward polar residues: residues 399–428 and 436–454; these read LQNGHSLSPNSGKYRSRSPTPQRKFLNQQA and ATGSSQTVTTDTSSGQLLG. The span at 502–527 shows a compositional bias: gly residues; it reads GGSGVGSAAGGVSSGSAGSGVAGEQG. A compositionally biased stretch (polar residues) spans 577–589; sequence RLDQTSSDSQISP. Residues 601 to 620 show a composition bias toward acidic residues; the sequence is ILEEEDLNGQDREEDQEDYS. Polar residues-rich tracts occupy residues 666 to 677 and 731 to 741; these read VANTMGNPTPNL and TRNSTGATTTP. Residues 928–953 are compositionally biased toward low complexity; the sequence is SSAASSCESNNSNAGAGSGAAAGSAS.

It belongs to the GAS2 family. As to expression, expressed in the ovary and the ring canals of the germline cells. In larvae, expressed in the notal region of the wing disk.

It is found in the cytoplasm. It localises to the cytoskeleton. The protein resides in the cell cortex. Essential for development and viability. Required for ovary development and oogenesis, and is essential for the development of the indirect flight muscles. May act as a negative regulator of the Notch signaling pathway in certain tissues, such as the muscle precursors and ovaries. May function as a linker protein between the actin and microtubule cytoskeletons. The sequence is that of GAS2-like protein pickled eggs from Drosophila melanogaster (Fruit fly).